The primary structure comprises 271 residues: Putative hydro-lyase jk0403 (271 aa).

The protein belongs to the D-glutamate cyclase family.

This chain is Putative hydro-lyase jk0403, found in Corynebacterium jeikeium (strain K411).